The sequence spans 234 residues: ATP synthase subunit a 2 (234 aa).

5 consecutive transmembrane segments (helical) span residues 20–40, 78–98, 107–127, 169–189, and 194–214; these read ATLI…WFVT, YLPF…LSVI, SLST…LYGV, VMSG…FFPV, and LGLL…MVFI.

The protein belongs to the ATPase A chain family. F-type ATPases have 2 components, CF(1) - the catalytic core - and CF(0) - the membrane proton channel. CF(1) has five subunits: alpha(3), beta(3), gamma(1), delta(1), epsilon(1). CF(0) has four main subunits: a, b, b' and c.

The protein localises to the cellular thylakoid membrane. In terms of biological role, key component of the proton channel; it plays a direct role in the translocation of protons across the membrane. The sequence is that of ATP synthase subunit a 2 from Acaryochloris marina (strain MBIC 11017).